The sequence spans 193 residues: GTP cyclohydrolase-2 (193 aa).

45–49 contacts GTP; that stretch reads RIHSE. Zn(2+) is bound by residues Cys-50, Cys-61, and Cys-63. GTP contacts are provided by residues Gln-66, 87–89, and Thr-109; that span reads EGR. The Proton acceptor role is filled by Asp-121. Arg-123 acts as the Nucleophile in catalysis. GTP is bound by residues Thr-144 and Lys-149.

It belongs to the GTP cyclohydrolase II family. The cofactor is Zn(2+).

It catalyses the reaction GTP + 4 H2O = 2,5-diamino-6-hydroxy-4-(5-phosphoribosylamino)-pyrimidine + formate + 2 phosphate + 3 H(+). Its pathway is cofactor biosynthesis; riboflavin biosynthesis; 5-amino-6-(D-ribitylamino)uracil from GTP: step 1/4. In terms of biological role, catalyzes the conversion of GTP to 2,5-diamino-6-ribosylamino-4(3H)-pyrimidinone 5'-phosphate (DARP), formate and pyrophosphate. The protein is GTP cyclohydrolase-2 of Campylobacter hominis (strain ATCC BAA-381 / DSM 21671 / CCUG 45161 / LMG 19568 / NCTC 13146 / CH001A).